Reading from the N-terminus, the 862-residue chain is Valine--tRNA ligase (862 aa).

The 'HIGH' region signature appears at 43–53 (PTVSGALHVGH). Positions 459 to 494 (ERPILPDDAALPVDPSSDTPTGYHDSQRHQPGGFMA) are disordered. A 'KMSKS' region motif is present at residues 574 to 578 (KMSKS). ATP is bound at residue Lys-577.

It belongs to the class-I aminoacyl-tRNA synthetase family. ValS type 2 subfamily. As to quaternary structure, monomer.

The protein localises to the cytoplasm. It catalyses the reaction tRNA(Val) + L-valine + ATP = L-valyl-tRNA(Val) + AMP + diphosphate. In terms of biological role, catalyzes the attachment of valine to tRNA(Val). As ValRS can inadvertently accommodate and process structurally similar amino acids such as threonine, to avoid such errors, it has a 'posttransfer' editing activity that hydrolyzes mischarged Thr-tRNA(Val) in a tRNA-dependent manner. The chain is Valine--tRNA ligase from Salinispora arenicola (strain CNS-205).